The following is an 89-amino-acid chain: MALDSVRKQEIIGKFKQHEKDTGSPEVQIAILTDRINYLTGHLKTHKKDHHSRRGLLKMVGQRRNLLAYLKRTDIERYRKLVTELGLRH.

This sequence belongs to the universal ribosomal protein uS15 family. As to quaternary structure, part of the 30S ribosomal subunit. Forms a bridge to the 50S subunit in the 70S ribosome, contacting the 23S rRNA.

One of the primary rRNA binding proteins, it binds directly to 16S rRNA where it helps nucleate assembly of the platform of the 30S subunit by binding and bridging several RNA helices of the 16S rRNA. Functionally, forms an intersubunit bridge (bridge B4) with the 23S rRNA of the 50S subunit in the ribosome. The chain is Small ribosomal subunit protein uS15 from Heliobacterium modesticaldum (strain ATCC 51547 / Ice1).